A 102-amino-acid chain; its full sequence is Large ribosomal subunit protein eL21 (102 aa).

The span at 1-21 shows a compositional bias: basic residues; that stretch reads MVRRSKGFRSRTRKKLRKKPR. The interval 1-33 is disordered; that stretch reads MVRRSKGFRSRTRKKLRKKPRERGLSPLGPMTQ.

It belongs to the eukaryotic ribosomal protein eL21 family.

This is Large ribosomal subunit protein eL21 from Methanopyrus kandleri (strain AV19 / DSM 6324 / JCM 9639 / NBRC 100938).